Here is a 560-residue protein sequence, read N- to C-terminus: Arginine--tRNA ligase (560 aa).

Positions proline 121–histidine 131 match the 'HIGH' region motif.

The protein belongs to the class-I aminoacyl-tRNA synthetase family. As to quaternary structure, monomer.

It localises to the cytoplasm. It carries out the reaction tRNA(Arg) + L-arginine + ATP = L-arginyl-tRNA(Arg) + AMP + diphosphate. The protein is Arginine--tRNA ligase of Exiguobacterium sp. (strain ATCC BAA-1283 / AT1b).